The primary structure comprises 440 residues: Putative postmeiotic segregation increased 2-like protein 1 (440 aa).

Residues 164 to 178 show a composition bias toward basic and acidic residues; it reads RVEHNVESSRWEPRR. A disordered region spans residues 164 to 215; it reads RVEHNVESSRWEPRRRGACGSRGGNFPSPRGGSGVASLERAESSSTEPAKAI. In terms of domain architecture, Histidine kinase spans 230 to 364; the sequence is PVVPSLSTAV…MTVSVKQLFS (135 aa).

It belongs to the DNA mismatch repair MutL/HexB family. As to expression, highly expressed in kidney, spleen, adrenal gland, ovary and cerebellum and to a lower extent in liver, esophagus, stomach, duodenum, colon, bladder, uterus, lung, pancreas and cerebrum. Not expressed in heart.

In Homo sapiens (Human), this protein is Putative postmeiotic segregation increased 2-like protein 1 (PMS2P1).